A 394-amino-acid polypeptide reads, in one-letter code: RILP-like protein 1 (394 aa).

In terms of domain architecture, RH1 spans 2-89; the sequence is EGISALEKNV…RLERMDRIEK (88 aa). A coiled-coil region spans residues 68 to 327; sequence EMEELRLELD…EAEEENKLPQ (260 aa). The RH2 domain occupies 282 to 347; sequence RPRFTLQELR…IPQESGIKRL (66 aa).

The protein belongs to the RILPL family.

It localises to the cytoplasm. The protein resides in the cytosol. It is found in the cytoskeleton. The protein localises to the microtubule organizing center. Its subcellular location is the centrosome. It localises to the cell projection. The protein resides in the cilium. In terms of biological role, plays a role in the regulation of cell shape and polarity. Plays a role in cellular protein transport, including protein transport away from primary cilia. Neuroprotective protein. The polypeptide is RILP-like protein 1 (rilpl1) (Xenopus laevis (African clawed frog)).